The sequence spans 82 residues: Acyl carrier protein (82 aa).

Residues 2–77 (DNVADRVKKV…QAIDYVSAHI (76 aa)) form the Carrier domain. The residue at position 37 (Ser-37) is an O-(pantetheine 4'-phosphoryl)serine.

Belongs to the acyl carrier protein (ACP) family. 4'-phosphopantetheine is transferred from CoA to a specific serine of apo-ACP by AcpS. This modification is essential for activity because fatty acids are bound in thioester linkage to the sulfhydryl of the prosthetic group.

The protein resides in the cytoplasm. Its pathway is lipid metabolism; fatty acid biosynthesis. Functionally, carrier of the growing fatty acid chain in fatty acid biosynthesis. The polypeptide is Acyl carrier protein (Acidithiobacillus ferrooxidans (strain ATCC 23270 / DSM 14882 / CIP 104768 / NCIMB 8455) (Ferrobacillus ferrooxidans (strain ATCC 23270))).